A 75-amino-acid chain; its full sequence is Exodeoxyribonuclease 7 small subunit (75 aa).

This sequence belongs to the XseB family. Heterooligomer composed of large and small subunits.

Its subcellular location is the cytoplasm. It carries out the reaction Exonucleolytic cleavage in either 5'- to 3'- or 3'- to 5'-direction to yield nucleoside 5'-phosphates.. Functionally, bidirectionally degrades single-stranded DNA into large acid-insoluble oligonucleotides, which are then degraded further into small acid-soluble oligonucleotides. In Chlamydia pneumoniae (Chlamydophila pneumoniae), this protein is Exodeoxyribonuclease 7 small subunit.